Here is a 202-residue protein sequence, read N- to C-terminus: Na(+)-translocating NADH-quinone reductase subunit E (202 aa).

Transmembrane regions (helical) follow at residues 11–31 (AVFIENMALAFFLGMCTFIAI), 35–55 (VETAIGLGIAVIVVQTITVPA), 79–99 (LSFLGLLSYIGVIAAIVQILE), 114–134 (GVFLPLITVNCAIMGGTLFMV), 144–164 (VVYGMGSGLSWALAIALLAGI), and 180–200 (LGITFITIGLMSLGFMSFSGV).

This sequence belongs to the NqrDE/RnfAE family. In terms of assembly, composed of six subunits; NqrA, NqrB, NqrC, NqrD, NqrE and NqrF.

It is found in the cell inner membrane. It carries out the reaction a ubiquinone + n Na(+)(in) + NADH + H(+) = a ubiquinol + n Na(+)(out) + NAD(+). Functionally, NQR complex catalyzes the reduction of ubiquinone-1 to ubiquinol by two successive reactions, coupled with the transport of Na(+) ions from the cytoplasm to the periplasm. NqrA to NqrE are probably involved in the second step, the conversion of ubisemiquinone to ubiquinol. The protein is Na(+)-translocating NADH-quinone reductase subunit E of Stutzerimonas stutzeri (strain A1501) (Pseudomonas stutzeri).